A 322-amino-acid polypeptide reads, in one-letter code: Ferrochelatase (322 aa).

2 residues coordinate Fe cation: histidine 193 and glutamate 274.

It belongs to the ferrochelatase family.

It is found in the cytoplasm. It carries out the reaction heme b + 2 H(+) = protoporphyrin IX + Fe(2+). It participates in porphyrin-containing compound metabolism; protoheme biosynthesis; protoheme from protoporphyrin-IX: step 1/1. In terms of biological role, catalyzes the ferrous insertion into protoporphyrin IX. This is Ferrochelatase from Photobacterium profundum (strain SS9).